Consider the following 163-residue polypeptide: Staphylokinase (163 aa).

The signal sequence occupies residues 1 to 27; that stretch reads MLKRSLLFLTVLLLLFSFSSITNEVSA.

Belongs to the staphylokinase family.

It is found in the secreted. Functionally, potent plasminogen activator that converts plasminogen into plasmin. It forms a 1:1 complex with plasmin, which in turn activates other plasminogen molecules. In Staphylococcus aureus (Bacteriophage P42D), this protein is Staphylokinase (sak).